Consider the following 317-residue polypeptide: tRNA dimethylallyltransferase (317 aa).

18–25 serves as a coordination point for ATP; that stretch reads GPTATGKT. Residue 20-25 participates in substrate binding; sequence TATGKT. Interaction with substrate tRNA regions lie at residues 43-46, 167-171, and 281-288; these read DSAL, QRIQR, and KRQITWLR.

It belongs to the IPP transferase family. In terms of assembly, monomer. Mg(2+) serves as cofactor.

The enzyme catalyses adenosine(37) in tRNA + dimethylallyl diphosphate = N(6)-dimethylallyladenosine(37) in tRNA + diphosphate. Functionally, catalyzes the transfer of a dimethylallyl group onto the adenine at position 37 in tRNAs that read codons beginning with uridine, leading to the formation of N6-(dimethylallyl)adenosine (i(6)A). This is tRNA dimethylallyltransferase from Alkalilimnicola ehrlichii (strain ATCC BAA-1101 / DSM 17681 / MLHE-1).